Reading from the N-terminus, the 624-residue chain is Dihydroxy-acid dehydratase (624 aa).

D81 contributes to the Mg(2+) binding site. C122 provides a ligand contact to [2Fe-2S] cluster. Mg(2+)-binding residues include D123 and K124. At K124 the chain carries N6-carboxylysine. [2Fe-2S] cluster is bound at residue C195. E499 lines the Mg(2+) pocket. S525 functions as the Proton acceptor in the catalytic mechanism.

It belongs to the IlvD/Edd family. Homodimer. The cofactor is [2Fe-2S] cluster. Mg(2+) serves as cofactor.

It carries out the reaction (2R)-2,3-dihydroxy-3-methylbutanoate = 3-methyl-2-oxobutanoate + H2O. It catalyses the reaction (2R,3R)-2,3-dihydroxy-3-methylpentanoate = (S)-3-methyl-2-oxopentanoate + H2O. It participates in amino-acid biosynthesis; L-isoleucine biosynthesis; L-isoleucine from 2-oxobutanoate: step 3/4. Its pathway is amino-acid biosynthesis; L-valine biosynthesis; L-valine from pyruvate: step 3/4. Its function is as follows. Functions in the biosynthesis of branched-chain amino acids. Catalyzes the dehydration of (2R,3R)-2,3-dihydroxy-3-methylpentanoate (2,3-dihydroxy-3-methylvalerate) into 2-oxo-3-methylpentanoate (2-oxo-3-methylvalerate) and of (2R)-2,3-dihydroxy-3-methylbutanoate (2,3-dihydroxyisovalerate) into 2-oxo-3-methylbutanoate (2-oxoisovalerate), the penultimate precursor to L-isoleucine and L-valine, respectively. This chain is Dihydroxy-acid dehydratase, found in Shewanella baltica (strain OS185).